The following is a 196-amino-acid chain: Large ribosomal subunit protein uL18 (196 aa).

This sequence belongs to the universal ribosomal protein uL18 family. Part of the 50S ribosomal subunit. Contacts the 5S and 23S rRNAs.

Functionally, this is one of the proteins that bind and probably mediate the attachment of the 5S RNA into the large ribosomal subunit, where it forms part of the central protuberance. The protein is Large ribosomal subunit protein uL18 of Saccharolobus islandicus (strain L.S.2.15 / Lassen #1) (Sulfolobus islandicus).